We begin with the raw amino-acid sequence, 646 residues long: Acetyl-coenzyme A synthetase (646 aa).

CoA is bound by residues 190–193 and T309; that span reads RAGN. ATP is bound by residues 385–387, 409–414, D498, and R513; these read GEP and DTWWQT. Position 521 (S521) interacts with CoA. An ATP-binding site is contributed by R524. Mg(2+)-binding residues include V535, H537, and V540. R582 is a CoA binding site. An N6-acetyllysine modification is found at K607.

The protein belongs to the ATP-dependent AMP-binding enzyme family. The cofactor is Mg(2+). Post-translationally, acetylated. Deacetylation by the SIR2-homolog deacetylase activates the enzyme.

It carries out the reaction acetate + ATP + CoA = acetyl-CoA + AMP + diphosphate. In terms of biological role, catalyzes the conversion of acetate into acetyl-CoA (AcCoA), an essential intermediate at the junction of anabolic and catabolic pathways. AcsA undergoes a two-step reaction. In the first half reaction, AcsA combines acetate with ATP to form acetyl-adenylate (AcAMP) intermediate. In the second half reaction, it can then transfer the acetyl group from AcAMP to the sulfhydryl group of CoA, forming the product AcCoA. The protein is Acetyl-coenzyme A synthetase of Pseudoalteromonas translucida (strain TAC 125).